Reading from the N-terminus, the 429-residue chain is Adenylosuccinate synthetase (429 aa).

GTP is bound by residues 12 to 18 (GDEGKGK) and 40 to 42 (GHT). The active-site Proton acceptor is D13. The Mg(2+) site is built by D13 and G40. IMP-binding positions include 13 to 16 (DEGK), 38 to 41 (NAGH), T128, R142, Q223, T238, and R302. Catalysis depends on H41, which acts as the Proton donor. 298–304 (TTTGRPR) is a binding site for substrate. GTP is bound by residues R304, 330-332 (SID), and 412-414 (SVG).

Belongs to the adenylosuccinate synthetase family. As to quaternary structure, homodimer. It depends on Mg(2+) as a cofactor.

The protein resides in the cytoplasm. The enzyme catalyses IMP + L-aspartate + GTP = N(6)-(1,2-dicarboxyethyl)-AMP + GDP + phosphate + 2 H(+). It participates in purine metabolism; AMP biosynthesis via de novo pathway; AMP from IMP: step 1/2. In terms of biological role, plays an important role in the de novo pathway of purine nucleotide biosynthesis. Catalyzes the first committed step in the biosynthesis of AMP from IMP. The sequence is that of Adenylosuccinate synthetase from Exiguobacterium sp. (strain ATCC BAA-1283 / AT1b).